The sequence spans 144 residues: Probable nucleoside diphosphate kinase 5 (144 aa).

ATP is bound by residues lysine 3, phenylalanine 51, arginine 79, threonine 85, arginine 99, and asparagine 109. Residue histidine 112 is the Pros-phosphohistidine intermediate of the active site.

The protein belongs to the NDK family.

The enzyme catalyses a 2'-deoxyribonucleoside 5'-diphosphate + ATP = a 2'-deoxyribonucleoside 5'-triphosphate + ADP. The catalysed reaction is a ribonucleoside 5'-diphosphate + ATP = a ribonucleoside 5'-triphosphate + ADP. Its function is as follows. Involved in the synthesis of nucleoside triphosphates other than ATP. The ATP gamma phosphate is transferred to the NDP beta phosphate via a ping-pong mechanism, using a phosphorylated active-site intermediate. The chain is Probable nucleoside diphosphate kinase 5 from Arabidopsis thaliana (Mouse-ear cress).